The chain runs to 87 residues: Small ribosomal subunit protein bS20 (87 aa).

It belongs to the bacterial ribosomal protein bS20 family.

Its function is as follows. Binds directly to 16S ribosomal RNA. This Shigella flexneri serotype 5b (strain 8401) protein is Small ribosomal subunit protein bS20.